A 103-amino-acid polypeptide reads, in one-letter code: Large ribosomal subunit protein bL21 (103 aa).

Belongs to the bacterial ribosomal protein bL21 family. In terms of assembly, part of the 50S ribosomal subunit. Contacts protein L20.

In terms of biological role, this protein binds to 23S rRNA in the presence of protein L20. The polypeptide is Large ribosomal subunit protein bL21 (Kocuria rhizophila (strain ATCC 9341 / DSM 348 / NBRC 103217 / DC2201)).